The primary structure comprises 441 residues: Membrane protein PB1A10.07c (441 aa).

11 consecutive transmembrane segments (helical) span residues 1–21, 41–61, 97–117, 128–148, 158–178, 206–226, 235–255, 263–283, 307–327, 364–384, and 415–435; these read MGAV…VVGI, VGAV…SWCM, LSFT…LCNT, GLWP…FFIP, IISV…LVDF, TVGM…FFCA, INTI…HPTI, GLAQ…SALA, VIGA…AASS, YNFI…ASLL, and IITS…PVFF.

The protein belongs to the TDE1 family.

It localises to the membrane. This is Membrane protein PB1A10.07c from Schizosaccharomyces pombe (strain 972 / ATCC 24843) (Fission yeast).